Reading from the N-terminus, the 270-residue chain is Dihydroorotate dehydrogenase B (NAD(+)), catalytic subunit (270 aa).

FMN-binding positions include Ser-12 and 35-36 (KT). Residues Lys-35, 59-63 (NRIGL), and Asn-114 contribute to the substrate site. Asn-114 lines the FMN pocket. Catalysis depends on Cys-117, which acts as the Nucleophile. Lys-153 and Val-179 together coordinate FMN. 180–181 (NT) serves as a coordination point for substrate. Residues Gly-199, 226 to 227 (GG), and 248 to 249 (GS) each bind FMN.

This sequence belongs to the dihydroorotate dehydrogenase family. Type 1 subfamily. Heterotetramer of 2 PyrK and 2 PyrD type B subunits. FMN is required as a cofactor.

Its subcellular location is the cytoplasm. The catalysed reaction is (S)-dihydroorotate + NAD(+) = orotate + NADH + H(+). The protein operates within pyrimidine metabolism; UMP biosynthesis via de novo pathway; orotate from (S)-dihydroorotate (NAD(+) route): step 1/1. Catalyzes the conversion of dihydroorotate to orotate with NAD(+) as electron acceptor. This is Dihydroorotate dehydrogenase B (NAD(+)), catalytic subunit (pyrD) from Thermotoga maritima (strain ATCC 43589 / DSM 3109 / JCM 10099 / NBRC 100826 / MSB8).